Consider the following 175-residue polypeptide: Peptide methionine sulfoxide reductase MsrA (175 aa).

Cysteine 10 is an active-site residue.

This sequence belongs to the MsrA Met sulfoxide reductase family.

It catalyses the reaction L-methionyl-[protein] + [thioredoxin]-disulfide + H2O = L-methionyl-(S)-S-oxide-[protein] + [thioredoxin]-dithiol. The enzyme catalyses [thioredoxin]-disulfide + L-methionine + H2O = L-methionine (S)-S-oxide + [thioredoxin]-dithiol. Has an important function as a repair enzyme for proteins that have been inactivated by oxidation. Catalyzes the reversible oxidation-reduction of methionine sulfoxide in proteins to methionine. This chain is Peptide methionine sulfoxide reductase MsrA, found in Psychrobacter sp. (strain PRwf-1).